Here is a 1338-residue protein sequence, read N- to C-terminus: Fanconi anemia group I protein (1338 aa).

Residue K525 forms a Glycyl lysine isopeptide (Lys-Gly) (interchain with G-Cter in ubiquitin) linkage. Phosphoserine is present on residues S558 and S561. A Phosphothreonine modification is found at T567.

This sequence belongs to the Fanconi anemia group I protein family. As to quaternary structure, homodimer. Part of a FANCI-FANCD2 heterodimeric complex that binds and scans dsDNA for DNA damage. Interacts with FANCL. Interacts with MTMR15/FAN1. Interacts with POLN. Interacts with UBL5; the interaction promotes FANCI homodimerization. Post-translationally, monoubiquitinated by FANCL during S phase and upon genotoxic stress. Deubiquitinated by USP1 as cells enter G2/M, or once DNA repair is completed. Monoubiquitination requires the FANCA-FANCB-FANCC-FANCE-FANCF-FANCG-FANCM complex. Ubiquitination is required for binding to chromatin, DNA repair, and normal cell cycle progression. Monoubiquitination is stimulated by DNA-binding. In terms of processing, phosphorylated in response to DNA damage by ATM and/or ATR. Phosphorylation of FANCI promotes ubiquitination of FANCD2, which prevents DNA release from the FANCI-FANCD2 complex.

Plays an essential role in the repair of DNA double-strand breaks by homologous recombination and in the repair of interstrand DNA cross-links (ICLs) by promoting FANCD2 monoubiquitination by FANCL and participating in recruitment to DNA repair sites. The FANCI-FANCD2 complex binds and scans double-stranded DNA (dsDNA) for DNA damage; this complex stalls at DNA junctions between double-stranded DNA and single-stranded DNA. Participates in S phase and G2 phase checkpoint activation upon DNA damage. The protein is Fanconi anemia group I protein of Gallus gallus (Chicken).